The sequence spans 197 residues: C4-dicarboxylate transport transcriptional regulatory protein DctR (197 aa).

The region spanning 4–120 is the Response regulatory domain; it reads TVHIVDDEES…HIVDIALSAI (117 aa). Position 53 is a 4-aspartylphosphate (Asp-53). The inter-domain linker stretch occupies residues 128–135; it reads AEAQAREA. The 62-residue stretch at 136-197 folds into the HTH luxR-type domain; sequence VAARRASLSA…RNIADLARMT (62 aa). A DNA-binding region (H-T-H motif) is located at residues 160–179; it reads NKQIAERLGIAMRTVEVHRS.

Post-translationally, phosphorylated by DctS.

Its subcellular location is the cytoplasm. In terms of biological role, member of the two-component regulatory system DctS/DctR involved in the transport of C4-dicarboxylates. DctR functions as a transcriptional repressor of genes for C4-dicarboxylate transport. This is C4-dicarboxylate transport transcriptional regulatory protein DctR (dctR) from Rhodobacter capsulatus (Rhodopseudomonas capsulata).